The primary structure comprises 460 residues: ATP synthase subunit beta 1 (460 aa).

149–156 (GGAGVGKT) serves as a coordination point for ATP.

This sequence belongs to the ATPase alpha/beta chains family. As to quaternary structure, F-type ATPases have 2 components, CF(1) - the catalytic core - and CF(0) - the membrane proton channel. CF(1) has five subunits: alpha(3), beta(3), gamma(1), delta(1), epsilon(1). CF(0) has three main subunits: a(1), b(2) and c(9-12). The alpha and beta chains form an alternating ring which encloses part of the gamma chain. CF(1) is attached to CF(0) by a central stalk formed by the gamma and epsilon chains, while a peripheral stalk is formed by the delta and b chains.

The protein resides in the cell inner membrane. It carries out the reaction ATP + H2O + 4 H(+)(in) = ADP + phosphate + 5 H(+)(out). Produces ATP from ADP in the presence of a proton gradient across the membrane. The catalytic sites are hosted primarily by the beta subunits. This chain is ATP synthase subunit beta 1, found in Nitrosomonas eutropha (strain DSM 101675 / C91 / Nm57).